We begin with the raw amino-acid sequence, 178 residues long: MSRIGKKPVVIPSGVTINVAAGNKVEVKGAKATLSKTFSTDVTFSVADNVATITLNNNSKNAVAQSGTARAILSNMVEGVSKGFERKLKIIGVGYRAKAQGNELNLTLGFSHPVVYKLPQGITAETPAPTEIILKGADKELLGKVASEIREYRKPEPYKGKGVRYEDEYVAKKEAKKK.

The protein belongs to the universal ribosomal protein uL6 family. As to quaternary structure, part of the 50S ribosomal subunit.

In terms of biological role, this protein binds to the 23S rRNA, and is important in its secondary structure. It is located near the subunit interface in the base of the L7/L12 stalk, and near the tRNA binding site of the peptidyltransferase center. The sequence is that of Large ribosomal subunit protein uL6 from Francisella tularensis subsp. tularensis (strain WY96-3418).